The following is a 1262-amino-acid chain: Isoleucine--tRNA ligase, cytoplasmic (1262 aa).

At methionine 1 the chain carries N-acetylmethionine. Positions 48 to 58 (PFATGLPHYGH) match the 'HIGH' region motif. The short motif at 600 to 604 (KMSKR) is the 'KMSKS' region element. Lysine 603 contributes to the ATP binding site. Phosphoserine is present on serine 1049. Threonine 1058 is subject to Phosphothreonine.

Belongs to the class-I aminoacyl-tRNA synthetase family. As to quaternary structure, part of a multisubunit complex that groups tRNA ligases for Arg (RARS1), Asp (DARS1), Gln (QARS1), Ile (IARS1), Leu (LARS1), Lys (KARS1), Met (MARS1) the bifunctional ligase for Glu and Pro (EPRS1) and the auxiliary subunits AIMP1/p43, AIMP2/p38 and EEF1E1/p18.

The protein localises to the cytoplasm. It is found in the cytosol. The catalysed reaction is tRNA(Ile) + L-isoleucine + ATP = L-isoleucyl-tRNA(Ile) + AMP + diphosphate. In terms of biological role, catalyzes the specific attachment of an amino acid to its cognate tRNA in a 2 step reaction: the amino acid (AA) is first activated by ATP to form AA-AMP and then transferred to the acceptor end of the tRNA. The chain is Isoleucine--tRNA ligase, cytoplasmic (Iars1) from Mus musculus (Mouse).